The following is a 283-amino-acid chain: Vitamin K epoxide reductase homolog (283 aa).

Residues 1 to 20 (MASYLKLKAQEETWLQRHSR) are Cytoplasmic-facing. The chain crosses the membrane as a helical span at residues 21–41 (LILAILAGLGSLLTAYLTYTK). Topologically, residues 42 to 66 (LTEQPAAFCTGDGGCDLVLSSRWAE) are periplasmic. Residues Cys50 and Cys56 are joined by a disulfide bond. 59-65 (VLSSRWA) contributes to the a quinone binding site. A helical membrane pass occupies residues 67–87 (FLGIPTAAVGLLGFLGVLALA). Topologically, residues 88–102 (VLPDGLPLVKRWRWP) are cytoplasmic. The chain crosses the membrane as a helical span at residues 103–123 (ALFGLVSAMTAFEMYMLYLMV). Residue 111–122 (MTAFEMYMLYLM) coordinates a quinone. At 124–128 (AVLRQ) the chain is on the periplasmic side. Residues 129–149 (FCMYCTTAIILVAGLGLVTVL) form a helical membrane-spanning segment. A disulfide bridge connects residues Cys130 and Cys133. Residues 150–158 (GHRWLDGGK) lie on the Cytoplasmic side of the membrane. A helical membrane pass occupies residues 159-179 (LAFSYILVAFLTLVTTIGVYA). The Periplasmic segment spans residues 180–283 (NQVPPPSPLA…ASGYPLEEGR (104 aa)). Residues 186 to 283 (SPLAVGLAAH…ASGYPLEEGR (98 aa)) form a thioredoxin-like domain region. 2 cysteine pairs are disulfide-bonded: Cys209–Cys212 and Cys231–Cys244.

The protein belongs to the VKOR family.

The protein resides in the membrane. Inhibited by ferulenol. In terms of biological role, thiol-disulfide oxidoreductase that catalyzes vitamin K-dependent disulfide bond formation in periplasmic target proteins. This Synechococcus sp. (strain JA-2-3B'a(2-13)) (Cyanobacteria bacterium Yellowstone B-Prime) protein is Vitamin K epoxide reductase homolog.